The following is a 446-amino-acid chain: Glycerol-3-phosphate acyltransferase 3 (446 aa).

3 consecutive transmembrane segments (helical) span residues 11 to 31, 146 to 166, and 168 to 188; these read IFIIWLTLVIVLILLPSMFGS, LRVTLIWVLGLCVRYCILLPL, and ITLATIGISWLVLGATLVGQL. The short motif at 236 to 241 is the HXXXXD motif element; sequence HTSPID.

The protein belongs to the 1-acyl-sn-glycerol-3-phosphate acyltransferase family.

The protein resides in the endoplasmic reticulum membrane. It carries out the reaction sn-glycerol 3-phosphate + an acyl-CoA = a 1-acyl-sn-glycero-3-phosphate + CoA. The catalysed reaction is a 1-acyl-sn-glycero-3-phosphate + an acyl-CoA = a 1,2-diacyl-sn-glycero-3-phosphate + CoA. It catalyses the reaction dodecanoyl-CoA + sn-glycerol 3-phosphate = 1-dodecanoyl-sn-glycerol 3-phosphate + CoA. The enzyme catalyses sn-glycerol 3-phosphate + hexadecanoyl-CoA = 1-hexadecanoyl-sn-glycero-3-phosphate + CoA. It carries out the reaction sn-glycerol 3-phosphate + (9Z)-octadecenoyl-CoA = 1-(9Z-octadecenoyl)-sn-glycero-3-phosphate + CoA. The catalysed reaction is (9Z,12Z)-octadecadienoyl-CoA + sn-glycerol 3-phosphate = 1-(9Z,12Z)-octadecadienoyl-sn-glycero-3-phosphate + CoA. It catalyses the reaction 1-tetradecanoyl-sn-glycerol 3-phosphate + (9Z)-octadecenoyl-CoA = 1-tetradecanoyl-2-(9Z)-octadecenoyl-sn-glycero-3-phosphate + CoA. The enzyme catalyses 1-hexadecanoyl-sn-glycero-3-phosphate + (9Z)-octadecenoyl-CoA = 1-hexadecanoyl-2-(9Z-octadecenoyl)-sn-glycero-3-phosphate + CoA. It carries out the reaction 1-(9Z-octadecenoyl)-sn-glycero-3-phosphate + (9Z)-octadecenoyl-CoA = 1,2-di-(9Z-octadecenoyl)-sn-glycero-3-phosphate + CoA. The catalysed reaction is 1-(6Z,9Z,12Z-octadecatrienoyl)-sn-glycero-3-phosphate + (9Z)-octadecenoyl-CoA = (6Z,9Z,12Z)-octadecatrienoyl-2-(9Z)-octadecenoyl-sn-glycero-3-phosphate + CoA. It catalyses the reaction 1-(9Z,12Z,15Z)-octadecatrienoyl-sn-glycero-3-phosphate + (9Z)-octadecenoyl-CoA = 1-(9Z,12Z,15Z)-octadecatrienoyl-2-(9Z)-octadecenoyl-sn-glycero-3-phosphate + CoA. The enzyme catalyses 1-(9Z-octadecenoyl)-sn-glycero-3-phosphate + tetradecanoyl-CoA = 1-(9Z)-octadecenoyl-2-tetradecanoyl-sn-glycero-3-phosphate + CoA. It carries out the reaction 1-(9Z-octadecenoyl)-sn-glycero-3-phosphate + hexadecanoyl-CoA = 1-(9Z)-octadecenoyl-2-hexadecanoyl-sn-glycero-3-phosphate + CoA. The catalysed reaction is 1-(9Z-octadecenoyl)-sn-glycero-3-phosphate + octadecanoyl-CoA = 1-(9Z-octadecenoyl)-2-octadecanoyl-sn-glycero-3-phosphate + CoA. It catalyses the reaction 1-(9Z-octadecenoyl)-sn-glycero-3-phosphate + (9Z,12Z)-octadecadienoyl-CoA = 1-(9Z)-octadecenoyl-2-(9Z,12Z)-octadecadienoyl-sn-glycero-3-phosphate + CoA. The enzyme catalyses 1-(5Z,8Z,11Z,14Z-eicosatetraenoyl)-sn-glycero-3-phosphate + (9Z)-octadecenoyl-CoA = 1-(5Z,8Z,11Z,14Z)-eicosatetraenoyl-2-(9Z)-octadecenoyl-sn-glycero-3-phosphate + CoA. It functions in the pathway glycerolipid metabolism; triacylglycerol biosynthesis. Its pathway is phospholipid metabolism; CDP-diacylglycerol biosynthesis; CDP-diacylglycerol from sn-glycerol 3-phosphate: step 1/3. Its function is as follows. Converts glycerol-3-phosphate to 1-acyl-sn-glycerol-3-phosphate (lysophosphatidic acid or LPA) by incorporating an acyl moiety at the sn-1 position of the glycerol backbone. Also converts LPA into 1,2-diacyl-sn-glycerol-3-phosphate (phosphatidic acid or PA) by incorporating an acyl moiety at the sn-2 position of the glycerol backbone. Protects cells against lipotoxicity. The protein is Glycerol-3-phosphate acyltransferase 3 of Xenopus laevis (African clawed frog).